Here is a 224-residue protein sequence, read N- to C-terminus: Ribonuclease 3 (224 aa).

One can recognise an RNase III domain in the interval 4–127; it reads YSKLEKCLDY…IMGAIYLESG (124 aa). Position 40 (E40) interacts with Mg(2+). The active site involves D44. Residues D113 and E116 each coordinate Mg(2+). Residue E116 is part of the active site. One can recognise a DRBM domain in the interval 154–223; it reads DYKTALQEIT…AKIAIDKLKE (70 aa).

It belongs to the ribonuclease III family. In terms of assembly, homodimer. Mg(2+) is required as a cofactor.

It is found in the cytoplasm. It catalyses the reaction Endonucleolytic cleavage to 5'-phosphomonoester.. In terms of biological role, digests double-stranded RNA. Involved in the processing of primary rRNA transcript to yield the immediate precursors to the large and small rRNAs (23S and 16S). Processes some mRNAs, and tRNAs when they are encoded in the rRNA operon. Processes pre-crRNA and tracrRNA of type II CRISPR loci if present in the organism. This Aliarcobacter butzleri (strain RM4018) (Arcobacter butzleri) protein is Ribonuclease 3.